The sequence spans 113 residues: uncharacterized protein (113 aa).

The N-terminal stretch at 1 to 29 (MLVVYMCIWVLYLLLFLFLFLFIASPASL) is a signal peptide. 2 consecutive transmembrane segments (helical) span residues 34 to 54 (THIL…CAFF) and 56 to 76 (QVLC…FYFF).

Its subcellular location is the membrane. This is an uncharacterized protein from Saccharomyces cerevisiae (strain ATCC 204508 / S288c) (Baker's yeast).